Reading from the N-terminus, the 119-residue chain is Fluoride-specific ion channel FluC (119 aa).

4 consecutive transmembrane segments (helical) span residues 5–25, 30–50, 59–79, and 92–112; these read IIPL…LNLA, LSPA…IGIF, WKLL…GFSL, and SALA…WLGL. 2 residues coordinate Na(+): Gly69 and Thr72.

It belongs to the fluoride channel Fluc/FEX (TC 1.A.43) family.

It localises to the cell inner membrane. The catalysed reaction is fluoride(in) = fluoride(out). Its activity is regulated as follows. Na(+) is not transported, but it plays an essential structural role and its presence is essential for fluoride channel function. Its function is as follows. Fluoride-specific ion channel. Important for reducing fluoride concentration in the cell, thus reducing its toxicity. In Neisseria meningitidis serogroup A / serotype 4A (strain DSM 15465 / Z2491), this protein is Fluoride-specific ion channel FluC.